We begin with the raw amino-acid sequence, 399 residues long: Elongation factor Tu (399 aa).

In terms of domain architecture, tr-type G spans 10–207 (KPHLNIGTIG…AVDNYVPEPQ (198 aa)). The interval 19–26 (GHIDHGKT) is G1. 19 to 26 (GHIDHGKT) is a binding site for GTP. Threonine 26 serves as a coordination point for Mg(2+). The segment at 60–64 (GITIN) is G2. A G3 region spans residues 81 to 84 (DCPG). GTP contacts are provided by residues 81–85 (DCPGH) and 136–139 (NKVD). A G4 region spans residues 136-139 (NKVD). The segment at 174 to 176 (SAL) is G5.

Belongs to the TRAFAC class translation factor GTPase superfamily. Classic translation factor GTPase family. EF-Tu/EF-1A subfamily. Monomer.

The protein localises to the cytoplasm. It carries out the reaction GTP + H2O = GDP + phosphate + H(+). In terms of biological role, GTP hydrolase that promotes the GTP-dependent binding of aminoacyl-tRNA to the A-site of ribosomes during protein biosynthesis. This Kosmotoga olearia (strain ATCC BAA-1733 / DSM 21960 / TBF 19.5.1) protein is Elongation factor Tu.